A 532-amino-acid polypeptide reads, in one-letter code: Chaperonin GroEL 2 (532 aa).

Residues 30 to 33 (TLGP), K51, 87 to 91 (DGTTT), G415, 479 to 481 (NAA), and D495 each bind ATP.

It belongs to the chaperonin (HSP60) family. As to quaternary structure, forms a cylinder of 14 subunits composed of two heptameric rings stacked back-to-back. Interacts with the co-chaperonin GroES.

The protein resides in the cytoplasm. The enzyme catalyses ATP + H2O + a folded polypeptide = ADP + phosphate + an unfolded polypeptide.. Together with its co-chaperonin GroES, plays an essential role in assisting protein folding. The GroEL-GroES system forms a nano-cage that allows encapsulation of the non-native substrate proteins and provides a physical environment optimized to promote and accelerate protein folding. The sequence is that of Chaperonin GroEL 2 from Vibrio parahaemolyticus serotype O3:K6 (strain RIMD 2210633).